Here is a 323-residue protein sequence, read N- to C-terminus: MDPKYQRVELNDGHFMPVLGFGTYAPPEVPRNRAVEVTKLAIEAGFRHIDSAYLYNNEEQVGLAIRSKIADGSVKREDIFYTSKLWCTFFQPQMVQPALESSLKKLQLDYVDLYLLHFPMALKPGETPLPKDENGKVIFDTVDLSATWEVMEKCKDAGLAKSIGVSNFNCRQLEMILNKPGLKYKPVCNQVECHPYLNQSKLLDFCKSKDIVLVAHSALGTQRHKLWVDPNSPVLLEDPVLCALAKKHKQTPALIALRYQLQRGVVVLAKSYNEQRIRENIQVFEFQLTSEDMKVLDGLNRNYRYVVMDFLMDHPDYPFSDEY.

NADP(+) is bound by residues 20–24 and D50; that span reads GFGTY. Y55 (proton donor) is an active-site residue. Substrate is bound at residue H117. NADP(+)-binding positions include 166–167, Q190, 216–221, and 270–280; these read SN, HSALGT, and KSYNEQRIREN.

This sequence belongs to the aldo/keto reductase family. As to quaternary structure, monomer. In terms of processing, the N-terminus is blocked. In terms of tissue distribution, liver specific.

It localises to the cytoplasm. The protein localises to the cytosol. The enzyme catalyses a 3alpha-hydroxysteroid + NADP(+) = a 3-oxosteroid + NADPH + H(+). It carries out the reaction a 3alpha-hydroxysteroid + NAD(+) = a 3-oxosteroid + NADH + H(+). It catalyses the reaction 5alpha-androstane-3alpha,17beta-diol + NADP(+) = 17beta-hydroxy-5alpha-androstan-3-one + NADPH + H(+). The catalysed reaction is 5alpha-androstane-3beta,17beta-diol + NADP(+) = 17beta-hydroxy-5alpha-androstan-3-one + NADPH + H(+). The enzyme catalyses 5alpha-androstane-3alpha,17beta-diol + NAD(+) = 17beta-hydroxy-5alpha-androstan-3-one + NADH + H(+). It carries out the reaction 17beta-estradiol + NADP(+) = estrone + NADPH + H(+). It catalyses the reaction 17beta-estradiol + NAD(+) = estrone + NADH + H(+). The catalysed reaction is (20S)-hydroxypregn-4-en-3-one + NADP(+) = progesterone + NADPH + H(+). The enzyme catalyses (20S)-hydroxypregn-4-en-3-one + NAD(+) = progesterone + NADH + H(+). It carries out the reaction androsterone + NADP(+) = 5alpha-androstan-3,17-dione + NADPH + H(+). It catalyses the reaction testosterone + NADP(+) = androst-4-ene-3,17-dione + NADPH + H(+). The catalysed reaction is testosterone + NAD(+) = androst-4-ene-3,17-dione + NADH + H(+). The enzyme catalyses 3alpha-hydroxy-5alpha-androstane 17-O-(beta-D-glucuronate) + NADP(+) = 5alpha-dihydrotestosterone 17-O-(beta-D-glucuronate) + NADPH + H(+). It carries out the reaction (3beta,5alpha,17beta)-3-hydroxy-androstan-17-yl sulfate + NADP(+) = 5alpha-dihydrotestosterone sulfate + NADPH + H(+). It catalyses the reaction 5alpha-androstane-3alpha,17beta-diol + NAD(+) = androsterone + NADH + H(+). The catalysed reaction is chlordecone alcohol + NADP(+) = chlordecone + NADPH + H(+). It functions in the pathway steroid metabolism. Its activity is regulated as follows. Inhibited by nonsteroidal the anti-inflammatory drugs (NSAID) flufenamic. The oxidation reaction is inhibited by low micromolar concentrations of NADPH. Functionally, cytosolic aldo-keto reductase that catalyzes the NADH and NADPH-dependent reduction of ketosteroids to hydroxysteroids. Liver specific enzyme that acts as an NAD(P)(H)-dependent 3-, 17- and 20-ketosteroid reductase on the steroid nucleus and side chain. Displays the ability to catalyze both oxidation and reduction in vitro, but most probably acts as a reductase in vivo since the oxidase activity measured in vitro is inhibited by physiological concentration of NADPH. Acts preferentially as a 3-alpha-hydroxysteroid dehydrogenase (HSD) with a subsidiary 3-beta-HSD activity. Catalyzes efficiently the transformation of the potent androgen 5-alpha-dihydrotestosterone (5alpha-DHT or 17beta-hydroxy-5alpha-androstan-3-one) into the less active form, 5-alpha-androstan-3-alpha,17-beta-diol (3-alpha-diol). Catalyzes the reduction of estrone into 17beta-estradiol but with low efficiency. Metabolizes a broad spectrum of natural and synthetic therapeutic steroid and plays an important role in metabolism of androgens, estrogens, progestereone and conjugated steroids. Catalyzes the biotransformation of the pesticide chlordecone (kepone) to its corresponding alcohol leading to increased biliary excretion of the pesticide and concomitant reduction of its neurotoxicity since bile is the major excretory route. In Homo sapiens (Human), this protein is Aldo-keto reductase family 1 member C4 (AKR1C4).